Reading from the N-terminus, the 72-residue chain is UPF0352 protein Patl_3379 (72 aa).

The protein belongs to the UPF0352 family.

The protein is UPF0352 protein Patl_3379 of Pseudoalteromonas atlantica (strain T6c / ATCC BAA-1087).